A 382-amino-acid chain; its full sequence is Protein arginine N-methyltransferase PRMT10 (382 aa).

The segment at 1-21 is disordered; it reads MASLPNGAASASAASSAAGGG. Positions 7–17 are enriched in low complexity; that stretch reads GAASASAASSA. One can recognise an SAM-dependent MTase PRMT-type domain in the interval 28 to 359; the sequence is EVDFANYFCT…KENHRLMDME (332 aa). Active-site residues include Glu142 and Glu151. The dimerization arm stretch occupies residues 189 to 229; it reads ENKMEDLEIAMHDWNLFVEDTESYYGVNMNVLTKAYRAEHE.

Belongs to the class I-like SAM-binding methyltransferase superfamily. Protein arginine N-methyltransferase family. In terms of assembly, ring-like homodimer.

It catalyses the reaction L-arginyl-[protein] + 2 S-adenosyl-L-methionine = N(omega),N(omega)-dimethyl-L-arginyl-[protein] + 2 S-adenosyl-L-homocysteine + 2 H(+). Its function is as follows. Methylates (mono and asymmetric dimethylation) the guanidino nitrogens of arginyl residues in some proteins. The polypeptide is Protein arginine N-methyltransferase PRMT10 (PRMT10) (Oryza sativa subsp. indica (Rice)).